The primary structure comprises 176 residues: Nucleoside triphosphate/diphosphate phosphatase (176 aa).

The active-site Proton donor is R23. Mg(2+)-binding residues include N87, D103, D105, D107, D120, and E123.

Belongs to the Ntdp family. Requires Mg(2+) as cofactor.

It carries out the reaction a ribonucleoside 5'-triphosphate + H2O = a ribonucleoside 5'-diphosphate + phosphate + H(+). It catalyses the reaction a ribonucleoside 5'-diphosphate + H2O = a ribonucleoside 5'-phosphate + phosphate + H(+). Has nucleoside phosphatase activity towards nucleoside triphosphates and nucleoside diphosphates. This is Nucleoside triphosphate/diphosphate phosphatase from Bacillus mycoides (strain KBAB4) (Bacillus weihenstephanensis).